A 314-amino-acid chain; its full sequence is Olfactory receptor 52K1 (314 aa).

Topologically, residues 1–27 (MLPSNITSTHPAVFLLVGIPGLEHLHA) are extracellular. Residue Asn5 is glycosylated (N-linked (GlcNAc...) asparagine). A helical membrane pass occupies residues 28 to 48 (WISIPFCFAYTLALLGNCTLL). Over 49-56 (FIIQADAA) the chain is Cytoplasmic. A helical transmembrane segment spans residues 57-77 (LHEPMYLFLAMLATIDLVLSS). Over 78 to 101 (TTLPKMLAIFWFRDQEINFFACLV) the chain is Extracellular. Cys99 and Cys191 are oxidised to a cystine. A helical transmembrane segment spans residues 102 to 122 (QMFFLHSFSIMESAVLLAMAF). The Cytoplasmic segment spans residues 123 to 141 (DRYVAICKPLHYTTVLTGS). Residues 142 to 162 (LITKIGMAAVARAVTLMTPLP) traverse the membrane as a helical segment. At 163–198 (FLLRRFHYCRGPVIAHCYCEHMAVVRLACGDTSFNN) the chain is on the extracellular side. Residues 199–219 (IYGIAVAMFIVVLDLLFVILS) form a helical membrane-spanning segment. Residues 220–239 (YVFILQAVLQLASQEARYKA) are Cytoplasmic-facing. The chain crosses the membrane as a helical span at residues 240-260 (FGTCVSHIGAILSTYTPVVIS). Residues 261 to 275 (SVMHRVARHAAPRVH) are Extracellular-facing. Residues 276–296 (ILLAIFYLLFPPMVNPIIYGV) traverse the membrane as a helical segment. Residues 297-314 (KTKQIREYVLSLFQRKNM) are Cytoplasmic-facing.

It belongs to the G-protein coupled receptor 1 family.

It localises to the cell membrane. Functionally, odorant receptor. In Homo sapiens (Human), this protein is Olfactory receptor 52K1 (OR52K1).